We begin with the raw amino-acid sequence, 225 residues long: Uracil-DNA glycosylase (225 aa).

Residue aspartate 64 is the Proton acceptor of the active site.

Belongs to the uracil-DNA glycosylase (UDG) superfamily. UNG family.

Its subcellular location is the cytoplasm. The enzyme catalyses Hydrolyzes single-stranded DNA or mismatched double-stranded DNA and polynucleotides, releasing free uracil.. Excises uracil residues from the DNA which can arise as a result of misincorporation of dUMP residues by DNA polymerase or due to deamination of cytosine. The polypeptide is Uracil-DNA glycosylase (Agathobacter rectalis (strain ATCC 33656 / DSM 3377 / JCM 17463 / KCTC 5835 / VPI 0990) (Eubacterium rectale)).